The following is a 237-amino-acid chain: Ribonuclease PH (237 aa).

Residues Arg-86 and 124-126 (GTR) each bind phosphate.

It belongs to the RNase PH family. As to quaternary structure, homohexameric ring arranged as a trimer of dimers.

The enzyme catalyses tRNA(n+1) + phosphate = tRNA(n) + a ribonucleoside 5'-diphosphate. Phosphorolytic 3'-5' exoribonuclease that plays an important role in tRNA 3'-end maturation. Removes nucleotide residues following the 3'-CCA terminus of tRNAs; can also add nucleotides to the ends of RNA molecules by using nucleoside diphosphates as substrates, but this may not be physiologically important. Probably plays a role in initiation of 16S rRNA degradation (leading to ribosome degradation) during starvation. The sequence is that of Ribonuclease PH from Erythrobacter litoralis (strain HTCC2594).